The primary structure comprises 88 residues: Sec-independent protein translocase protein TatA (88 aa).

The helical transmembrane segment at 3–23 (IFGVGLPEVTVILILALLIFG) threads the bilayer. Residues 56–66 (MKEEDKDESPK) show a composition bias toward basic and acidic residues. The disordered stretch occupies residues 56–88 (MKEEDKDESPKSIESNQSNEINQEKIDSENSNN). Over residues 67 to 76 (SIESNQSNEI) the composition is skewed to polar residues. Residues 77–88 (NQEKIDSENSNN) are compositionally biased toward basic and acidic residues.

Belongs to the TatA/E family. Forms a complex with TatC.

The protein resides in the cell inner membrane. Part of the twin-arginine translocation (Tat) system that transports large folded proteins containing a characteristic twin-arginine motif in their signal peptide across membranes. TatA could form the protein-conducting channel of the Tat system. This is Sec-independent protein translocase protein TatA from Prochlorococcus marinus (strain MIT 9301).